The primary structure comprises 176 residues: Ribosome rescue factor SmrB (176 aa).

The 76-residue stretch at 93-168 (LDLHGYRQSE…GDAALLVLID (76 aa)) folds into the Smr domain.

The protein belongs to the SmrB family. In terms of assembly, associates with collided ribosomes, but not with correctly translating polysomes.

Functionally, acts as a ribosome collision sensor. Detects stalled/collided disomes (pairs of ribosomes where the leading ribosome is stalled and a second ribosome has collided with it) and endonucleolytically cleaves mRNA at the 5' boundary of the stalled ribosome. Stalled/collided disomes form a new interface (primarily via the 30S subunits) that binds SmrB. Cleaved mRNA becomes available for tmRNA ligation, leading to ribosomal subunit dissociation and rescue of stalled ribosomes. The chain is Ribosome rescue factor SmrB from Shewanella sp. (strain MR-4).